The following is a 365-amino-acid chain: UDP-N-acetylglucosamine--N-acetylmuramyl-(pentapeptide) pyrophosphoryl-undecaprenol N-acetylglucosamine transferase (365 aa).

Residues 12 to 14 (TGG), Asn-128, Arg-169, Ser-195, and Gln-296 contribute to the UDP-N-acetyl-alpha-D-glucosamine site.

Belongs to the glycosyltransferase 28 family. MurG subfamily.

The protein resides in the cell inner membrane. The enzyme catalyses di-trans,octa-cis-undecaprenyl diphospho-N-acetyl-alpha-D-muramoyl-L-alanyl-D-glutamyl-meso-2,6-diaminopimeloyl-D-alanyl-D-alanine + UDP-N-acetyl-alpha-D-glucosamine = di-trans,octa-cis-undecaprenyl diphospho-[N-acetyl-alpha-D-glucosaminyl-(1-&gt;4)]-N-acetyl-alpha-D-muramoyl-L-alanyl-D-glutamyl-meso-2,6-diaminopimeloyl-D-alanyl-D-alanine + UDP + H(+). The protein operates within cell wall biogenesis; peptidoglycan biosynthesis. Its function is as follows. Cell wall formation. Catalyzes the transfer of a GlcNAc subunit on undecaprenyl-pyrophosphoryl-MurNAc-pentapeptide (lipid intermediate I) to form undecaprenyl-pyrophosphoryl-MurNAc-(pentapeptide)GlcNAc (lipid intermediate II). This chain is UDP-N-acetylglucosamine--N-acetylmuramyl-(pentapeptide) pyrophosphoryl-undecaprenol N-acetylglucosamine transferase, found in Gluconobacter oxydans (strain 621H) (Gluconobacter suboxydans).